The primary structure comprises 403 residues: Tyrosine--tRNA ligase (403 aa).

Positions 42–51 (PTAPDLHLGH) match the 'HIGH' region motif. The 'KMSKS' region motif lies at 226 to 230 (KMSKS). Lys229 provides a ligand contact to ATP. Residues 339-400 (LRLAGLLTAA…GKRNFARVSL (62 aa)) enclose the S4 RNA-binding domain.

The protein belongs to the class-I aminoacyl-tRNA synthetase family. TyrS type 2 subfamily. In terms of assembly, homodimer.

Its subcellular location is the cytoplasm. The enzyme catalyses tRNA(Tyr) + L-tyrosine + ATP = L-tyrosyl-tRNA(Tyr) + AMP + diphosphate + H(+). Catalyzes the attachment of tyrosine to tRNA(Tyr) in a two-step reaction: tyrosine is first activated by ATP to form Tyr-AMP and then transferred to the acceptor end of tRNA(Tyr). The sequence is that of Tyrosine--tRNA ligase from Xanthomonas axonopodis pv. citri (strain 306).